The following is a 203-amino-acid chain: Glycerol-3-phosphate acyltransferase (203 aa).

The next 4 membrane-spanning stretches (helical) occupy residues 6–26, 82–102, 118–138, and 141–161; these read LTLLMIVAAYLAGSVSSAVLV, AISLGLIAIAACLGHIYPIFF, APIGDDLAICLMASWVVLVLI, and YSSLAAIITALLAPLYTWWLD.

This sequence belongs to the PlsY family. As to quaternary structure, probably interacts with PlsX.

It localises to the cell inner membrane. The catalysed reaction is an acyl phosphate + sn-glycerol 3-phosphate = a 1-acyl-sn-glycero-3-phosphate + phosphate. Its pathway is lipid metabolism; phospholipid metabolism. Functionally, catalyzes the transfer of an acyl group from acyl-phosphate (acyl-PO(4)) to glycerol-3-phosphate (G3P) to form lysophosphatidic acid (LPA). This enzyme utilizes acyl-phosphate as fatty acyl donor, but not acyl-CoA or acyl-ACP. The sequence is that of Glycerol-3-phosphate acyltransferase from Shewanella sp. (strain MR-7).